The following is a 62-amino-acid chain: INGDCELPKVVGPCRARFPRYYYNSSSKRCEKFIYGGCGGNANNFHTLEECEKVCGVRSVGR.

The region spanning 5-55 (CELPKVVGPCRARFPRYYYNSSSKRCEKFIYGGCGGNANNFHTLEECEKVC) is the BPTI/Kunitz inhibitor domain. 3 disulfide bridges follow: Cys5-Cys55, Cys14-Cys38, and Cys30-Cys51.

Belongs to the venom Kunitz-type family. Sea anemone type 2 potassium channel toxin subfamily.

The protein resides in the secreted. Its subcellular location is the nematocyst. Functionally, serine protease inhibitor that inhibits both tissue and plasma kallikreins. Has hemolytic activity. Inhibits voltage-gated potassium channels. The chain is KappaPI-actitoxin-Avd3a from Anemonia sulcata (Mediterranean snakelocks sea anemone).